The primary structure comprises 1159 residues: Cation channel sperm-associated auxiliary subunit gamma (1159 aa).

A signal peptide spans 1 to 35; the sequence is MCGPAMFPAGPRWPRVRVLQVLWALLAVLLASRRL. The Extracellular segment spans residues 36–1065; the sequence is WAIKDFEECT…IHGLPLSPKR (1030 aa). 2 disulfide bridges follow: Cys-44–Cys-105 and Cys-159–Cys-165. Asn-102 carries an N-linked (GlcNAc...) asparagine glycan. Asn-177 carries an N-linked (GlcNAc...) asparagine glycan. A disulfide bridge links Cys-288 with Cys-343. Asn-355 carries an N-linked (GlcNAc...) asparagine glycan. An intrachain disulfide couples Cys-394 to Cys-402. 2 N-linked (GlcNAc...) asparagine glycosylation sites follow: Asn-426 and Asn-574. 5 disulfides stabilise this stretch: Cys-638-Cys-860, Cys-806-Cys-834, Cys-882-Cys-1046, Cys-909-Cys-918, and Cys-1010-Cys-1016. The chain crosses the membrane as a helical span at residues 1066-1087; the sequence is ALFILMVSLSVFVGLVIFYIAF. Over 1088-1159 the chain is Cytoplasmic; sequence CLLWPLVVKG…KEAVERQLMT (72 aa). The interval 1138–1159 is disordered; that stretch reads FSSRMTEDKAEPKEAVERQLMT. A compositionally biased stretch (basic and acidic residues) spans 1142-1159; sequence MTEDKAEPKEAVERQLMT.

It belongs to the CATSPERG family. As to quaternary structure, component of the CatSper complex or CatSpermasome composed of the core pore-forming members CATSPER1, CATSPER2, CATSPER3 and CATSPER4 as well as auxiliary members CATSPERB, CATSPERG, CATSPERD, CATSPERE, CATSPERZ, SCLO6C1, TMEM249, TMEM262 and EFCAB9. HSPA1 may be an additional auxiliary complex member. The core complex members CATSPER1, CATSPER2, CATSPER3 and CATSPER4 form a heterotetrameric channel. The auxiliary CATSPERB, CATSPERG, CATSPERD and CATSPERE subunits form a pavilion-like structure over the pore which stabilizes the complex through interactions with CATSPER4, CATSPER3, CATSPER1 and CATSPER2 respectively. TMEM262/CATSPERH interacts with CATSPERB, further stabilizing the complex. C2CD6/CATSPERT interacts at least with CATSPERD and is required for targeting the CatSper complex in the flagellar membrane.

It localises to the cell projection. It is found in the cilium. The protein resides in the flagellum membrane. Functionally, auxiliary component of the CatSper complex, a complex involved in sperm cell hyperactivation. Sperm cell hyperactivation is needed for sperm motility which is essential late in the preparation of sperm for fertilization. This Macaca fascicularis (Crab-eating macaque) protein is Cation channel sperm-associated auxiliary subunit gamma.